The following is a 190-amino-acid chain: Probable RNA-binding protein 18 (190 aa).

One can recognise an RRM domain in the interval 25–106; sequence HRLWIGNLDP…KKLVVRWAHA (82 aa). A disordered region spans residues 166–190; the sequence is VYSYFKPPDKKRTTPYSRTAWKSRR.

The sequence is that of Probable RNA-binding protein 18 (RBM18) from Pongo abelii (Sumatran orangutan).